The following is a 158-amino-acid chain: 3-dehydroquinate dehydratase (158 aa).

Tyr-22 serves as the catalytic Proton acceptor. Substrate-binding residues include Asn-74, His-80, and Asp-87. His-100 (proton donor) is an active-site residue. Substrate-binding positions include 101–102 (IS) and Arg-111.

Belongs to the type-II 3-dehydroquinase family. In terms of assembly, homododecamer.

It carries out the reaction 3-dehydroquinate = 3-dehydroshikimate + H2O. It functions in the pathway metabolic intermediate biosynthesis; chorismate biosynthesis; chorismate from D-erythrose 4-phosphate and phosphoenolpyruvate: step 3/7. Catalyzes a trans-dehydration via an enolate intermediate. The protein is 3-dehydroquinate dehydratase of Helicobacter hepaticus (strain ATCC 51449 / 3B1).